The sequence spans 509 residues: Maturase K (509 aa).

It belongs to the intron maturase 2 family. MatK subfamily.

It localises to the plastid. The protein localises to the chloroplast. Its function is as follows. Usually encoded in the trnK tRNA gene intron. Probably assists in splicing its own and other chloroplast group II introns. The polypeptide is Maturase K (Anthocercis angustifolia (Narrow-leaf ray-flower)).